Here is a 476-residue protein sequence, read N- to C-terminus: Glycogen synthase (476 aa).

Lys15 is a binding site for ADP-alpha-D-glucose.

This sequence belongs to the glycosyltransferase 1 family. Bacterial/plant glycogen synthase subfamily.

The catalysed reaction is [(1-&gt;4)-alpha-D-glucosyl](n) + ADP-alpha-D-glucose = [(1-&gt;4)-alpha-D-glucosyl](n+1) + ADP + H(+). It participates in glycan biosynthesis; glycogen biosynthesis. Functionally, synthesizes alpha-1,4-glucan chains using ADP-glucose. The protein is Glycogen synthase of Chlamydia pneumoniae (Chlamydophila pneumoniae).